The sequence spans 93 residues: YcgL domain-containing protein KPK_1976 (93 aa).

The YcgL domain occupies M1–L85.

This chain is YcgL domain-containing protein KPK_1976, found in Klebsiella pneumoniae (strain 342).